We begin with the raw amino-acid sequence, 214 residues long: GTP-binding nuclear protein GSP1 (214 aa).

Residues 4 to 172 form the Small GTPase Ran-type domain; the sequence is RELTYKICLI…LHLARIFTGR (169 aa). 17–22 lines the GTP pocket; that stretch reads GVGKTT. The switch-I stretch occupies residues 34 to 42; that stretch reads KNYNATVGA. GTP-binding positions include glycine 66, 121–124, and 151–153; these read NKID and SAK. Residues 66–82 form a switch-II region; the sequence is GQEKKAVLKDVYYIGAS.

It belongs to the small GTPase superfamily. Ran family. In terms of assembly, found in a nuclear export complex with RanGTP, exportin and pre-miRNA.

The protein resides in the nucleus. In terms of biological role, GTP-binding protein involved in nucleocytoplasmic transport. Required for the import of protein into the nucleus and also for RNA export. This is GTP-binding nuclear protein GSP1 (GSP1) from Encephalitozoon cuniculi (strain GB-M1) (Microsporidian parasite).